Consider the following 423-residue polypeptide: Glutamine synthetase, chloroplastic (423 aa).

The transit peptide at 1–51 (MAQAVVPAMQCRVGVKAAAGRVWSAGRTRTGRGGASPGFKVMAVSTGSTGV) directs the protein to the chloroplast. One can recognise a GS beta-grasp domain in the interval 70–150 (VIAEYIWVGG…VICDTYTPQG (81 aa)). Residues 89–115 (RTISKPVEDPSELPKWNYDGSSTGQAP) form a disordered region. The 270-residue stretch at 154–423 (PTNKRHRAAQ…LAAKKLALKV (270 aa)) folds into the GS catalytic domain.

Belongs to the glutamine synthetase family. As to quaternary structure, homooctamer.

It is found in the plastid. Its subcellular location is the chloroplast. It catalyses the reaction L-glutamate + NH4(+) + ATP = L-glutamine + ADP + phosphate + H(+). In terms of biological role, the light-modulated chloroplast enzyme, encoded by a nuclear gene and expressed primarily in leaves, is responsible for the reassimilation of the ammonia generated by photorespiration. This chain is Glutamine synthetase, chloroplastic (GLN2), found in Zea mays (Maize).